Reading from the N-terminus, the 726-residue chain is MLTTFLNSLMMAMTMVTMTAPAQPQMTTVATAIDSNPNKASKDASDPRAYLNEIDGDKAMTWVEAHNLSTVDKLSKDPRYSEYQADALTILQATDRIASPSFARDGMIDNFWQDGTHVQGLWRRTTWESYRSGNPQWRTILDVDALSKAEGKTWVFEGGDCLPPTSNLCLIRLSDGGKDADVVREFDIAKGEFVKEGFVLPEGKQSVTWVDENTIYVTREWTPGEVTSSGYAYVTKVVKRGQSLDQAVEIFRGQKKDVSAERGVLRDIDGKYVMDTSYRGLDFFNTELAFYPNGHPDTRKVVLPLPTTAVFSGYYKGQAIYWLKSDWTSAKGTVFHNGAIIAFDLKAALADPARVEPLVLFMPNEHQSVAGTTQTKNRLVLSILSNVTSEVRSFDFGKGGWSSFKLALPENSTLSLTSSDDESDQLFVFSEGFLEPSTLFCADAATGQVEKITSTPARFDAGGLQAQQFWATSKDGTKVPYFLVARKDVKLDGTNPTILYAYGGFQIPMQPSYSAVLGKLWLEKGGAYALANIRGGGEFGPKWHDAGLKTNRQRVYDDFQAVAQDLIAKKVTSTPHLGIMGGSNGGLLMGVQMIQRPDLWNAVVIQVPLLDMVNFTRMSAGASWQAEYGSPDDPVEGAFLRSISPYHNVKAGVAYPEPFFETSTKDDRVGPVHARKMAALFEDMGLPFYYYENIEGGHAAAANLQEHARRYALEYIYMFQKLMDNK.

Catalysis depends on charge relay system residues Ser583 and His698.

Belongs to the peptidase S9B family.

This is an uncharacterized protein from Sinorhizobium fredii (strain NBRC 101917 / NGR234).